Consider the following 351-residue polypeptide: MYGFEALTFNIHGGYLEAIVRGHRAGLLTTADYNNLCQCENLDDIKMHLSATKYGPYLQNEPSPLHTTTIVEKCTLKLVDDYKHMLCQATEPMSTFLEYIRYGHMIDNVVLIVTGTLHERDVQELIEKCHPLGMFDSIATLAVAQNMRELYRLVLVDTPLAPYFSECLTSEDLDDMNIEIMRNTLYKAYLEDFYNFCQKLGGATAEIMSDLLAFEADRRAVNITINSIGTELTREDRKKLYSNFGLLYPYGHEELAICEDIDQVRGVMEKYPPYQAIFSKMSYGESQMLDKAFYEEEVRRLCLAFEQQFHYAVFFAYMRLREQEIRNLMWISECVAQNQKSRIHDSVVYMF.

It belongs to the V-ATPase V0D/AC39 subunit family. In terms of assembly, V-ATPase is a heteromultimeric enzyme composed of a peripheral catalytic V1 complex (components A to H) attached to an integral membrane V0 proton pore complex (components: a, c, c'', d and e).

Its subcellular location is the vacuole membrane. Subunit of the integral membrane V0 complex of vacuolar ATPase. Vacuolar ATPase is responsible for acidifying a variety of intracellular compartments in eukaryotic cells, thus providing most of the energy required for transport processes in the vacuolar system. This chain is V-type proton ATPase subunit d2 (VHA-d2), found in Arabidopsis thaliana (Mouse-ear cress).